The sequence spans 194 residues: Adenylate kinase isoenzyme 1 (194 aa).

Residue Ala-2 is modified to N-acetylalanine. Position 18–23 (18–23 (GSGKGT)) interacts with ATP. The interval 38-67 (SSGDLLRAEVASGSERGKQLQAIMQKGELV) is NMP. AMP-binding positions include Ser-39, Arg-44, 65-67 (ELV), 94-97 (GYPR), and Gln-101. Positions 131–141 (KRGQTSGRSDD) are LID. Arg-132 is a binding site for ATP. AMP-binding residues include Arg-138 and Arg-149. An ATP-binding site is contributed by Leu-177.

The protein belongs to the adenylate kinase family. AK1 subfamily. Monomer. Mg(2+) is required as a cofactor.

It localises to the cytoplasm. It carries out the reaction a ribonucleoside 5'-phosphate + ATP = a ribonucleoside 5'-diphosphate + ADP. The enzyme catalyses AMP + ATP = 2 ADP. The catalysed reaction is dAMP + ATP = dADP + ADP. It catalyses the reaction dATP + AMP = dADP + ADP. It carries out the reaction dAMP + dATP = 2 dADP. The enzyme catalyses a 2'-deoxyribonucleoside 5'-diphosphate + ATP = a 2'-deoxyribonucleoside 5'-triphosphate + ADP. The catalysed reaction is a ribonucleoside 5'-diphosphate + ATP = a ribonucleoside 5'-triphosphate + ADP. It catalyses the reaction CDP + GTP = CTP + GDP. It carries out the reaction GDP + ATP = GTP + ADP. The enzyme catalyses UDP + ATP = UTP + ADP. The catalysed reaction is GTP + UDP = UTP + GDP. It catalyses the reaction dTDP + GTP = dTTP + GDP. It carries out the reaction dCDP + GTP = dCTP + GDP. The enzyme catalyses dGDP + ATP = dGTP + ADP. The catalysed reaction is dADP + GTP = dATP + GDP. It catalyses the reaction thiamine diphosphate + ADP = thiamine triphosphate + AMP. Its function is as follows. Catalyzes the reversible transfer of the terminal phosphate group between ATP and AMP. Also displays broad nucleoside diphosphate kinase activity. Plays an important role in cellular energy homeostasis and in adenine nucleotide metabolism. Also catalyzes at a very low rate the synthesis of thiamine triphosphate (ThTP) from thiamine diphosphate (ThDP) and ADP. This Cyprinus carpio (Common carp) protein is Adenylate kinase isoenzyme 1 (ak1).